Here is a 218-residue protein sequence, read N- to C-terminus: Adenylate kinase (218 aa).

10–15 is a binding site for ATP; the sequence is GAGKGT. The segment at 30–59 is NMP; the sequence is STGDMLRAAIAKGTPLGLSAQKIMESGGLV. Residues threonine 31, arginine 36, 57-59, 85-88, and glutamine 92 contribute to the AMP site; these read GLV and GFPR. An LID region spans residues 122-159; it reads GRRIHQPSGRVYHVVNQPPKNPGVDDITGEPLIQRDDD. ATP is bound by residues arginine 123 and 132 to 133; that span reads VY. Arginine 156 and arginine 167 together coordinate AMP. An ATP-binding site is contributed by glycine 203.

It belongs to the adenylate kinase family. In terms of assembly, monomer.

Its subcellular location is the cytoplasm. It carries out the reaction AMP + ATP = 2 ADP. The protein operates within purine metabolism; AMP biosynthesis via salvage pathway; AMP from ADP: step 1/1. Functionally, catalyzes the reversible transfer of the terminal phosphate group between ATP and AMP. Plays an important role in cellular energy homeostasis and in adenine nucleotide metabolism. The sequence is that of Adenylate kinase from Legionella pneumophila (strain Corby).